The sequence spans 94 residues: Prepro-gonadotropin-releasing hormone-like protein (94 aa).

Positions 1–21 are cleaved as a signal peptide; that stretch reads MNACILLTTLVTMITIEKVQG.

It localises to the secreted. Neuropeptide involved in reproduction. May be an important hormone in the regulation of gonadal maturation. The chain is Prepro-gonadotropin-releasing hormone-like protein from Ruditapes philippinarum (Japanese carpet shell).